The following is a 96-amino-acid chain: Co-chaperonin GroES (96 aa).

It belongs to the GroES chaperonin family. In terms of assembly, heptamer of 7 subunits arranged in a ring. Interacts with the chaperonin GroEL.

The protein resides in the cytoplasm. Functionally, together with the chaperonin GroEL, plays an essential role in assisting protein folding. The GroEL-GroES system forms a nano-cage that allows encapsulation of the non-native substrate proteins and provides a physical environment optimized to promote and accelerate protein folding. GroES binds to the apical surface of the GroEL ring, thereby capping the opening of the GroEL channel. This Shewanella sediminis (strain HAW-EB3) protein is Co-chaperonin GroES.